We begin with the raw amino-acid sequence, 486 residues long: Vanillin dehydrogenase (486 aa).

Residues 210-211 (GP), 230-231 (GS), and 252-254 (ELG) each bind NAD(+). E252 (proton acceptor) is an active-site residue. Catalysis depends on C286, which acts as the Nucleophile. NAD(+) is bound at residue 380–382 (EVF).

The protein belongs to the aldehyde dehydrogenase family.

It carries out the reaction vanillin + NAD(+) + H2O = vanillate + NADH + 2 H(+). Catalyzes NAD(+)-dependent oxidation of vanillin to vanillate. Also oxidizes other aromatic aldehydes including benzaldehyde, coniferyl aldehyde and cinnamaldehyde, but has a preference for vanillin. Not active with NADP(+). Involved in the degradation pathway of lignin-derived aromatic compounds of plant cell walls. Catalyzes the conversion of vanillin to vanillate due to toxicity of vanillin to the cells. The chain is Vanillin dehydrogenase from Amycolatopsis sp. (strain ATCC 39116 / 75iv2).